We begin with the raw amino-acid sequence, 734 residues long: Photosystem I P700 chlorophyll a apoprotein A2 (734 aa).

The next 8 membrane-spanning stretches (helical) occupy residues 46-69, 135-158, 175-199, 273-291, 330-353, 369-395, 417-439, and 517-535; these read IFAS…FHVA, LYRG…LHLQ, LNHH…HVAI, IAHH…GHMY, LHFQ…QHMY, AALY…IFFI, AIIS…LYVH, and FLVH…LILV. The [4Fe-4S] cluster site is built by C559 and C568. The next 2 membrane-spanning stretches (helical) occupy residues 575 to 596 and 643 to 665; these read AFYL…YWHW and LSVW…MFLI. Chlorophyll a is bound by residues H654, M662, and Y670. W671 is a phylloquinone binding site. Residues 707 to 727 form a helical membrane-spanning segment; sequence LVGLSHFSVGYIFTYAAFLIA.

It belongs to the PsaA/PsaB family. As to quaternary structure, the PsaA/B heterodimer binds the P700 chlorophyll special pair and subsequent electron acceptors. PSI consists of a core antenna complex that captures photons, and an electron transfer chain that converts photonic excitation into a charge separation. The eukaryotic PSI reaction center is composed of at least 11 subunits. The cofactor is P700 is a chlorophyll a/chlorophyll a' dimer, A0 is one or more chlorophyll a, A1 is one or both phylloquinones and FX is a shared 4Fe-4S iron-sulfur center..

Its subcellular location is the plastid. The protein resides in the chloroplast thylakoid membrane. It carries out the reaction reduced [plastocyanin] + hnu + oxidized [2Fe-2S]-[ferredoxin] = oxidized [plastocyanin] + reduced [2Fe-2S]-[ferredoxin]. Its function is as follows. PsaA and PsaB bind P700, the primary electron donor of photosystem I (PSI), as well as the electron acceptors A0, A1 and FX. PSI is a plastocyanin-ferredoxin oxidoreductase, converting photonic excitation into a charge separation, which transfers an electron from the donor P700 chlorophyll pair to the spectroscopically characterized acceptors A0, A1, FX, FA and FB in turn. Oxidized P700 is reduced on the lumenal side of the thylakoid membrane by plastocyanin. The chain is Photosystem I P700 chlorophyll a apoprotein A2 from Chara vulgaris (Common stonewort).